A 3564-amino-acid polypeptide reads, in one-letter code: CUB and sushi domain-containing protein 1 (3564 aa).

The first 26 residues, 1–26 (MTAWRRFQSLLLLLGLLVLCARLLTA), serve as a signal peptide directing secretion. At 27–3487 (AKGQNCGGLV…SHYHGTSSGS (3461 aa)) the chain is on the extracellular side. 10 cysteine pairs are disulfide-bonded: C32–C58, C145–C185, C171–C202, C208–C234, C349–C389, C375–C406, C411–C437, C527–C567, C553–C580, and C584–C610. Residues 32-140 (CGGLVQGPNG…QGFKALYEVL (109 aa)) form the CUB 1 domain. Residues N40 and N57 are each glycosylated (N-linked (GlcNAc...) asparagine). The region spanning 143–204 (HTCGNPGEIL…WDFPAPFCRA (62 aa)) is the Sushi 1 domain. Residues 208-312 (CGGTLRGTSS…KGFNAQFQVK (105 aa)) form the CUB 2 domain. The 62-residue stretch at 347 to 408 (DMCPDPGIPE…WSDHRPICRA (62 aa)) folds into the Sushi 2 domain. The CUB 3 domain occupies 411–522 (CGSNLRGPSG…PGFKAVYQEI (112 aa)). In terms of domain architecture, Sushi 3 spans 525–582 (GGCGDPGIPAYGKRTGSSFLHGDTLTFECPAAFELVGERVITCQQNNQWSGNKPSCVF). The CUB 4 domain maps to 584–692 (CFFNFTASSG…RGFNITYTTF (109 aa)). Residues N587 and N686 are each glycosylated (N-linked (GlcNAc...) asparagine). Residues 695-756 (NECHDPGIPI…WSSTVPRCEA (62 aa)) enclose the Sushi 4 domain. Intrachain disulfides connect C697–C738, C723–C754, C758–C784, C873–C913, C899–C926, and C930–C956. In terms of domain architecture, CUB 5 spans 758-866 (CGGHLTASSG…IGFLIHYESV (109 aa)). The 58-residue stretch at 871–928 (DSCLDPGIPVNGHRHGGDFGIRSTVTFSCDPGYTLSDDEPLVCERNHQWNHALPSCDA) folds into the Sushi 5 domain. The CUB 6 domain occupies 930–1040 (CGGYIQGKSG…EGFNITFSEY (111 aa)). N-linked (GlcNAc...) asparagine glycosylation is found at N955, N1015, and N1034. In terms of domain architecture, Sushi 6 spans 1043–1102 (EPCDDPGVPAFSRRIGFHFGVGDSLTFSCFLGYRLEGATKLTCLGGGRRVWSAPLPRCVA). 3 cysteine pairs are disulfide-bonded: C1045–C1085, C1071–C1100, and C1104–C1130. Residues 1104–1212 (CGASVKGNEG…QGFQLTYTSF (109 aa)) form the CUB 7 domain. N-linked (GlcNAc...) asparagine glycans are attached at residues N1184 and N1197. Residues 1215-1275 (VKCEDPGIPN…WDKPLPSCIA (61 aa)) enclose the Sushi 7 domain. Cystine bridges form between C1217-C1258, C1244-C1273, C1277-C1304, C1391-C1431, C1417-C1447, C1451-C1477, C1564-C1604, C1590-C1621, C1625-C1651, C1741-C1781, C1767-C1798, and C1802-C1828. The CUB 8 domain maps to 1277–1386 (CGGQIHAATS…SGFSIQFSTS (110 aa)). The Sushi 8 domain occupies 1389 to 1449 (ATCNDPGMPQ…WQPDPPTCIA (61 aa)). N1399 is a glycosylation site (N-linked (GlcNAc...) asparagine). In terms of domain architecture, CUB 9 spans 1451-1559 (CGGNLTGPAG…SGFAIEFKEK (109 aa)). N-linked (GlcNAc...) asparagine glycans are attached at residues N1454 and N1572. The Sushi 9 domain maps to 1562-1623 (EACFDPGNIM…WDQVLPSCNA (62 aa)). Positions 1625-1733 (CGGQYTGSEG…RGFHFVYQAV (109 aa)) constitute a CUB 10 domain. N1644 is a glycosylation site (N-linked (GlcNAc...) asparagine). Residues 1739–1800 (TQCSSVPEPR…WNDTIPSCVV (62 aa)) form the Sushi 10 domain. 3 N-linked (GlcNAc...) asparagine glycosylation sites follow: N1792, N1805, and N1882. In terms of domain architecture, CUB 11 spans 1802–1910 (CSGNFTQRRG…AGFHLEYKTV (109 aa)). In terms of domain architecture, Sushi 11 spans 1913–1972 (AACQEPALPSNSIKIGDRYMVNDVLSFQCEPGYTLQGRSHISCMPGTVRRWNYPSPLCIA). 3 disulfides stabilise this stretch: C1915–C1955, C1941–C1970, and C1974–C2000. Residues 1974–2082 (CGGTLSTLGG…QGFKLAYQAY (109 aa)) form the CUB 12 domain. N-linked (GlcNAc...) asparagine glycosylation is present at N2018. Residues 2085 to 2144 (QNCPDPPPFQNGYMINSDYSVGQSVSFECYPGYILIGHPVLTCQHGINRNWNYPFPRCDA) form the Sushi 12 domain. 3 disulfide bridges follow: C2087–C2127, C2113–C2142, and C2146–C2172. Residues 2146–2257 (CGYNVTSQNG…LNFHAFQLKK (112 aa)) enclose the CUB 13 domain. Residues N2149, N2154, and N2187 are each glycosylated (N-linked (GlcNAc...) asparagine). Positions 2256–2317 (KKCQPPPAVP…FEGSLPTCEA (62 aa)) constitute a Sushi 13 domain. 3 disulfide bridges follow: C2258–C2300, C2286–C2315, and C2319–C2347. In terms of domain architecture, CUB 14 spans 2319–2430 (CPANEVRTGS…KGFKIRYAAP (112 aa)). 6 N-linked (GlcNAc...) asparagine glycosylation sites follow: N2358, N2394, N2400, N2445, N2470, and N2503. Sushi domains are found at residues 2430 to 2492 (PYCS…LCQA), 2493 to 2554 (VSCG…TCKP), 2555 to 2619 (VACP…SCRV), 2620 to 2677 (ISCG…RCLA), 2678 to 2735 (GHCG…VCVP), 2736 to 2793 (ITCG…TCRV), 2794 to 2856 (VNCS…KCLA), 2857 to 2914 (ISCG…HCTG), 2918 to 2975 (GFCG…VCEA), 2976 to 3034 (VSCG…DCTI), 3035 to 3094 (ISCG…VCKA), 3095 to 3152 (VLCP…QCLP), 3153 to 3210 (VFCG…TCID), 3214 to 3272 (NTCP…ECIP), and 3273 to 3332 (HACR…VCKS). Intrachain disulfides connect C2432–C2473, C2459–C2490, C2495–C2537, C2521–C2552, C2557–C2602, C2588–C2617, C2622–C2662, C2648–C2675, C2680–C2720, C2706–C2733, C2738–C2778, and C2764–C2791. Residue N2605 is glycosylated (N-linked (GlcNAc...) asparagine). Residues N2750 and N2761 are each glycosylated (N-linked (GlcNAc...) asparagine). Residue N2795 is glycosylated (N-linked (GlcNAc...) asparagine). Disulfide bonds link C2796/C2841, C2827/C2854, C2859/C2899, C2885/C2912, C2920/C2960, C2946/C2973, C2978/C3019, C3005/C3032, C3037/C3079, C3063/C3092, C3097/C3137, C3123/C3150, C3155/C3195, C3181/C3208, C3216/C3257, C3243/C3270, C3275/C3317, and C3302/C3330. N2894 carries N-linked (GlcNAc...) asparagine glycosylation. N2963 carries an N-linked (GlcNAc...) asparagine glycan. N-linked (GlcNAc...) asparagine glycans are attached at residues N3022 and N3056. N-linked (GlcNAc...) asparagine glycosylation occurs at N3105. Residues N3228 and N3260 are each glycosylated (N-linked (GlcNAc...) asparagine). N-linked (GlcNAc...) asparagine glycosylation is found at N3339, N3379, and N3386. A helical transmembrane segment spans residues 3488-3508 (VAAAILVPFFALILSGFAFYL). Topologically, residues 3509 to 3564 (YKHRTRPKVQYNGYAGHENSNGQASFENPMYDTNLKPTEAKAVRFDTTLNTVCTVV) are cytoplasmic.

This sequence belongs to the CSMD family. Weakly expressed in most tissues, except in brain. Expressed at intermediate level in brain, including cerebellum, substantia nigra, hippocampus and fetal brain.

Its subcellular location is the membrane. Potential suppressor of squamous cell carcinomas. The protein is CUB and sushi domain-containing protein 1 (CSMD1) of Homo sapiens (Human).